The chain runs to 484 residues: Glucan endo-1,3-beta-glucosidase 5 (484 aa).

The signal sequence occupies residues 1–26 (MLFKGVFAVFFVITLLYASLLIEVEG). Residue N102 is glycosylated (N-linked (GlcNAc...) asparagine). E122 acts as the Proton donor in catalysis. 2 N-linked (GlcNAc...) asparagine glycosylation sites follow: N129 and N260. The Nucleophile role is filled by E267. A disulfide bridge links C366 with C428. N409 carries an N-linked (GlcNAc...) asparagine glycan. The GPI-anchor amidated alanine moiety is linked to residue A460. Residues 461-484 (SAMMPITRSTAVLLLLSICLYIVL) constitute a propeptide, removed in mature form.

Belongs to the glycosyl hydrolase 17 family. In terms of processing, contains two additional disulfide bonds.

Its subcellular location is the cell membrane. It catalyses the reaction Hydrolysis of (1-&gt;3)-beta-D-glucosidic linkages in (1-&gt;3)-beta-D-glucans.. This chain is Glucan endo-1,3-beta-glucosidase 5, found in Arabidopsis thaliana (Mouse-ear cress).